The following is an 89-amino-acid chain: Acylphosphatase (89 aa).

The region spanning 3–88 (TLHLQIEGRV…GEYSGFEKRS (86 aa)) is the Acylphosphatase-like domain. Residues R18 and N36 contribute to the active site.

This sequence belongs to the acylphosphatase family.

It carries out the reaction an acyl phosphate + H2O = a carboxylate + phosphate + H(+). In Thiobacillus denitrificans (strain ATCC 25259 / T1), this protein is Acylphosphatase (acyP).